Here is a 308-residue protein sequence, read N- to C-terminus: Glycine--tRNA ligase alpha subunit (308 aa).

Belongs to the class-II aminoacyl-tRNA synthetase family. In terms of assembly, tetramer of two alpha and two beta subunits.

Its subcellular location is the cytoplasm. It carries out the reaction tRNA(Gly) + glycine + ATP = glycyl-tRNA(Gly) + AMP + diphosphate. The chain is Glycine--tRNA ligase alpha subunit from Brevibacillus brevis (strain 47 / JCM 6285 / NBRC 100599).